Here is a 471-residue protein sequence, read N- to C-terminus: Collagenase 3 (471 aa).

The first 19 residues, 1–19 (MQPGVLAACLLLSWTHCWS), serve as a signal peptide directing secretion. The propeptide at 20–103 (LPLLNSNEDD…PRCGVPDVGE (84 aa)) is activation peptide. Positions 94-101 (PRCGVPDV) match the Cysteine switch motif. C96 provides a ligand contact to Zn(2+). Residue N117 is glycosylated (N-linked (GlcNAc...) asparagine). D128 contributes to the Ca(2+) binding site. N-linked (GlcNAc...) asparagine glycans are attached at residues N152 and N158. D162 is a Ca(2+) binding site. H172 and D174 together coordinate Zn(2+). Residues 176-246 (YPFDGPSGLL…GALMFPIYTY (71 aa)) form an interaction with TIMP2 region. The Ca(2+) site is built by D179, G180, S182, and L184. H187 serves as a coordination point for Zn(2+). 3 residues coordinate Ca(2+): N194, G196, and D198. Residue H200 coordinates Zn(2+). Residues D202, D203, and E205 each coordinate Ca(2+). Position 222 (H222) interacts with Zn(2+). E223 is a catalytic residue. Residues H226, H232, and M240 each contribute to the Zn(2+) site. The segment at 263-284 (QSLYGPGDEDPNPKHPKTPDKC) is disordered. The tract at residues 268–471 (PGDEDPNPKH…VMPTNSLLWC (204 aa)) is interaction with collagen. The segment covering 273-284 (PNPKHPKTPDKC) has biased composition (basic and acidic residues). Hemopexin repeat units lie at residues 281–330 (PDKC…WPEL), 331–377 (PNRI…GFPR), 379–427 (VKKI…FPGI), and 428–471 (GGKV…LLWC). The cysteines at positions 284 and 471 are disulfide-linked. D291, I293, D335, and A337 together coordinate Ca(2+). Y366 carries the post-translational modification Phosphotyrosine; by PKDCC. Ca(2+) is bound by residues S383 and A385. N409 carries N-linked (GlcNAc...) asparagine glycosylation. Residues D432 and V434 each coordinate Ca(2+).

This sequence belongs to the peptidase M10A family. Ca(2+) is required as a cofactor. The cofactor is Zn(2+). Post-translationally, the proenzyme is activated by removal of the propeptide; this cleavage can be effected by other matrix metalloproteinases, such as MMP2, MMP3 and MMP14 and may involve several cleavage steps. Cleavage can also be autocatalytic, after partial maturation by another protease or after treatment with 4-aminophenylmercuric acetate (APMA) (in vitro). N-glycosylated. In terms of processing, tyrosine phosphorylated by PKDCC/VLK.

Its subcellular location is the secreted. It localises to the extracellular space. The protein localises to the extracellular matrix. Functionally, plays a role in the degradation of extracellular matrix proteins including fibrillar collagen, fibronectin, TNC and ACAN. Cleaves triple helical collagens, including type I, type II and type III collagen, but has the highest activity with soluble type II collagen. Can also degrade collagen type IV, type XIV and type X. May also function by activating or degrading key regulatory proteins, such as TGFB1 and CCN2. Plays a role in wound healing, tissue remodeling, cartilage degradation, bone development, bone mineralization and ossification. Required for normal embryonic bone development and ossification. Plays a role in the healing of bone fractures via endochondral ossification. Plays a role in wound healing, probably by a mechanism that involves proteolytic activation of TGFB1 and degradation of CCN2. Plays a role in keratinocyte migration during wound healing. May play a role in cell migration and in tumor cell invasion. The sequence is that of Collagenase 3 (MMP13) from Oryctolagus cuniculus (Rabbit).